Consider the following 570-residue polypeptide: Probable metalloreductase AIM14 (570 aa).

Helical transmembrane passes span 21–41, 70–90, 101–118, 142–162, 177–197, 204–224, and 230–250; these read IKYG…LALL, AIHL…HYSL, LGRL…LTLR, IITV…AIDD, FVGF…IGPM, LFYI…PIHS, and FPFL…RIVF. In terms of domain architecture, Ferric oxidoreductase spans 101–219; sequence LGRLSYALIP…NLVNVAFILL (119 aa). In terms of domain architecture, FAD-binding FR-type spans 250-388; that stretch reads FAKSLMILNK…GGSGISFALP (139 aa). The span at 481 to 505 shows a compositional bias: polar residues; the sequence is SNFNSENADSNDNTPETSHSPTKEN. The tract at residues 481-507 is disordered; it reads SNFNSENADSNDNTPETSHSPTKENGS.

It belongs to the ferric reductase (FRE) family. AIM14 subfamily. As to quaternary structure, interacts with ribosomes.

It localises to the membrane. Probable cell surface metalloreductase. May be involved in iron or copper homeostasis. In Saccharomyces cerevisiae (strain YJM789) (Baker's yeast), this protein is Probable metalloreductase AIM14 (AIM14).